Here is an 83-residue protein sequence, read N- to C-terminus: Mu-theraphotoxin-Hhn2i (83 aa).

The signal sequence occupies residues 1–21; the sequence is MKASMFLALAGLVLLFVVGYA. Positions 22 to 48 are excised as a propeptide; sequence SESEEKEFPRELLSKIFAVDDFKGEER. 3 cysteine pairs are disulfide-bonded: Cys50–Cys65, Cys57–Cys70, and Cys64–Cys77. Leu81 carries the post-translational modification Leucine amide.

This sequence belongs to the neurotoxin 10 (Hwtx-1) family. 15 (Hntx-3) subfamily. Monomer. In terms of tissue distribution, expressed by the venom gland.

Its subcellular location is the secreted. Lethal neurotoxin. Selectively blocks tetrodotoxin-sensitive voltage-gated sodium channels (Nav). Does not affect tetrodotoxin-resistant voltage-gated sodium channels or calcium channels. The sequence is that of Mu-theraphotoxin-Hhn2i from Cyriopagopus hainanus (Chinese bird spider).